Reading from the N-terminus, the 85-residue chain is Probable small nuclear ribonucleoprotein G (85 aa).

In terms of domain architecture, Sm spans Gln-6–Met-78.

This sequence belongs to the snRNP Sm proteins family. As to quaternary structure, core component of the spliceosomal U1, U2, U4 and U5 small nuclear ribonucleoproteins (snRNPs), the building blocks of the spliceosome. Most spliceosomal snRNPs contain a common set of Sm proteins, SNRPB, SNRPD1, SNRPD2, SNRPD3, SNRPE, SNRPF and SNRPG that assemble in a heptameric protein ring on the Sm site of the small nuclear RNA to form the core snRNP. Component of the U1 snRNP. Component of the U4/U6-U5 tri-snRNP complex. Component of the U7 snRNP complex. Component of the U11/U12 snRNPs that are part of the U12-type spliceosome.

The protein localises to the cytoplasm. Its subcellular location is the cytosol. It is found in the nucleus. Functionally, plays a role in pre-mRNA splicing as a core component of the spliceosomal U1, U2, U4 and U5 small nuclear ribonucleoproteins (snRNPs), the building blocks of the spliceosome. Component of both the pre-catalytic spliceosome B complex and activated spliceosome C complexes. Is also a component of the minor U12 spliceosome. The chain is Probable small nuclear ribonucleoprotein G (snrpG) from Dictyostelium discoideum (Social amoeba).